The chain runs to 121 residues: Phosphoribosyl-ATP pyrophosphatase (121 aa).

Belongs to the PRA-PH family.

The protein localises to the cytoplasm. The catalysed reaction is 1-(5-phospho-beta-D-ribosyl)-ATP + H2O = 1-(5-phospho-beta-D-ribosyl)-5'-AMP + diphosphate + H(+). It functions in the pathway amino-acid biosynthesis; L-histidine biosynthesis; L-histidine from 5-phospho-alpha-D-ribose 1-diphosphate: step 2/9. The sequence is that of Phosphoribosyl-ATP pyrophosphatase from Burkholderia cenocepacia (strain HI2424).